The primary structure comprises 202 residues: Imidazoleglycerol-phosphate dehydratase (202 aa).

The protein belongs to the imidazoleglycerol-phosphate dehydratase family.

It is found in the cytoplasm. The enzyme catalyses D-erythro-1-(imidazol-4-yl)glycerol 3-phosphate = 3-(imidazol-4-yl)-2-oxopropyl phosphate + H2O. It functions in the pathway amino-acid biosynthesis; L-histidine biosynthesis; L-histidine from 5-phospho-alpha-D-ribose 1-diphosphate: step 6/9. This Nocardioides sp. (strain ATCC BAA-499 / JS614) protein is Imidazoleglycerol-phosphate dehydratase.